The chain runs to 528 residues: GMP synthase [glutamine-hydrolyzing] (528 aa).

The Glutamine amidotransferase type-1 domain occupies 13-204 (SILILDFGSQ…VYSIAKCKAD (192 aa)). The active-site Nucleophile is the Cys90. Active-site residues include His178 and Glu180. Residues 205–403 (WTTETFLEET…LGLPDEIIKR (199 aa)) form the GMPS ATP-PPase domain. Residue 232-238 (SGGVDSS) participates in ATP binding.

As to quaternary structure, homodimer.

The catalysed reaction is XMP + L-glutamine + ATP + H2O = GMP + L-glutamate + AMP + diphosphate + 2 H(+). It participates in purine metabolism; GMP biosynthesis; GMP from XMP (L-Gln route): step 1/1. In terms of biological role, catalyzes the synthesis of GMP from XMP. In Prochlorococcus marinus subsp. pastoris (strain CCMP1986 / NIES-2087 / MED4), this protein is GMP synthase [glutamine-hydrolyzing].